A 728-amino-acid chain; its full sequence is Dynamin-like protein 1 (728 aa).

Residues 1-119 (MKELFQKIWQ…ILQEKVQSID (119 aa)) form an assembly domain, required for tetramerization region. In terms of domain architecture, Dynamin-type G spans 159 to 442 (QNLEFNIAIT…LYAGEKSKIA (284 aa)). The segment at 169–176 (GVMNAGKS) is G1 motif. 171–177 (MNAGKSS) provides a ligand contact to GDP. Residues 195-196 (ET) are G2 motif. The segment at 298-301 (DTPG) is G3 motif. The interval 358–361 (TKAD) is G4 motif. K359 lines the GDP pocket. E388 is a region of interest (G5 motif). Position 400–402 (400–402 (SAK)) interacts with GDP. The segment at 470 to 695 (ENKQGVSEEN…LESLEKVLQS (226 aa)) is required for liposome binding but not for tetramerization.

The protein belongs to the TRAFAC class dynamin-like GTPase superfamily. Dynamin/Fzo/YdjA family. Forms a 2:2 heterotetramer with DLP1. DLP2 forms a central back-to-back dimer flanked on each side by a DLP1 subunit. In the crystal structures the 2 DLP1 subunits are in very different conformations.

It localises to the cytoplasm. It is found in the cytosol. It carries out the reaction GTP + H2O = GDP + phosphate + H(+). The heterotetrameric DLP1(2)-DLP2(2) complex tethers liposomes and may mediate their fusion. Initial binding is probably mediated by DLP1, while DLP2 couples DLP1 subunits and increases the effective reach of the complex up to 45 nm. The role of the nucleotide is unknown. This subunit alone weakly binds to liposomes; GTP, GDP, GMPPCP and GMPPNP do not change heterotetramer binding. Tetramerization is required for GTPase activity, suggesting the GTPase domains (dynamin-type G) from DLP1 and DLP2 must dimerize to reconstitute the GTPase active site. In Campylobacter jejuni subsp. jejuni serotype O:23/36 (strain 81-176), this protein is Dynamin-like protein 1.